The sequence spans 104 residues: Large ribosomal subunit protein bL21 (104 aa).

The protein belongs to the bacterial ribosomal protein bL21 family. In terms of assembly, part of the 50S ribosomal subunit. Contacts protein L20.

Its function is as follows. This protein binds to 23S rRNA in the presence of protein L20. In Francisella philomiragia subsp. philomiragia (strain ATCC 25017 / CCUG 19701 / FSC 153 / O#319-036), this protein is Large ribosomal subunit protein bL21.